The following is a 306-amino-acid chain: Diacylglycerol kinase (306 aa).

The region spanning 1–132 is the DAGKc domain; sequence MRKRARIIYN…VDIGKMNSRY (132 aa). Residues 10–14, threonine 41, 67–73, and threonine 94 each bind ATP; these read NPTSG and GDGTLNE. Residues arginine 213, aspartate 216, and tyrosine 218 each coordinate Mg(2+). Catalysis depends on glutamate 273, which acts as the Proton acceptor.

This sequence belongs to the diacylglycerol/lipid kinase family. In terms of assembly, homodimer. It depends on Mg(2+) as a cofactor.

It carries out the reaction a 1,2-diacyl-sn-glycerol + ATP = a 1,2-diacyl-sn-glycero-3-phosphate + ADP + H(+). Functionally, catalyzes the phosphorylation of diacylglycerol (DAG) into phosphatidic acid. Is a key enzyme involved in the production of lipoteichoic acid by reintroducing DAG formed from the breakdown of membrane phospholipids into the phosphatidylglycerol biosynthetic pathway. The sequence is that of Diacylglycerol kinase (dagK) from Staphylococcus carnosus (strain TM300).